The chain runs to 1152 residues: MPSAGERPAVKMGPAPAGEQHRRATEDPEVMELAFEGMDKEKAPSRKRARTEPPAEGLLQPVNLSREELYKEPTNEELNRLRETEILFHSTLLRLQVEELLKEVRLSEKKKERIDNFLKEVTKRIQKVPPVPEAELTDQSWLPAGVRVPLHQVPYAVKGSFRFRPPSQITVVGSYLLDTCMRPDINVDVAVTMPREILQDKDGLNQRYFRKRALYLAHLAYHLAQDPLFSSVRFSYMSGCHLKPSLLLRPHGKDERLVTVRLLPCPPLDFFRPCRLLPTKNNVRSAWYRGQSCPDYEPPTPHYNTWILQDVALETHMHLLASVLGSAQGLKDGVALLKVWLRQRELDKGLGGFNGFIISMLVAFLVSKRKIHTTMSGYQVLRSVLQFLATTDLTINGISFSLSSDPSLPTLAEFHQLFAVVFVDPSGRLNLCADVTASTYNQVQYEAELSMALLDSKADDGFQLLLMTPKPMIQAFDHVVHLHPLSRLQASCHQLKLWPELQDNGGDYVSAALGPLTNILVQGLGCRLHLLAHSRPPVPEWSINQDPPKHKDAGTLTLGFLFRPEGLTSVIDLGPEADKPEAADFRQFWGTRSELRRFQDGAIREAVVWEAESLFEKRLIPHQVVTHLLALHADIPDTCIQYVGGFLDALIQNPKEISSTGEEALALAVRCYDDLSRLLWGLEGLPLTVSAVQGAHPVLRYTEVFPPAPVRPAYSFYNRLQELASLLPRPDKPCPAYVEPMTVVCHLEGSGQWPQDAEAVQRVRAAFQLRLAEVLTQEHRLQCCATATHTDVLKDGFVFRIRVAYQREPQILKEVRSPEGMVSLRDTPASLRLERDTKLLPLLTSALHGLQQQYPAYSGVARLAKRWVRAQLLGEGFTDESLDLLAASLFLHPEPFTPPSVPQVGFLRFLYLVSTFDWKNNPLIVNLNGELTAEEQVGIRSSFLAARTQLPVMVIITPQDRRSSVWTQDGPSAQILQQLVSLAAEALPILEKQLMDPRGPGDIRTVFRPPFDMYDVLIHLTPRHIPRHRQAVDPPVASFCRGLLAEPGPSSLMPVLGYDPPQLYLAQLREAFEDLALFFYDQHGGEVIGVLWKPSSFQPQPFKASSIKGRMVVSQGGELVMLPNIEAILEDFAVLGEGLVQAVEARSERWTV.

2 disordered regions span residues methionine 1 to valine 30 and glutamate 36 to alanine 55. A Phosphoserine modification is found at serine 65. A coiled-coil region spans residues leucine 92–valine 128. 2 positions are modified to phosphoserine: serine 292 and serine 817.

The protein belongs to the NRAP family. As to quaternary structure, part of the small subunit (SSU) processome, composed of more than 70 proteins and the RNA chaperone small nucleolar RNA (snoRNA) U3. Interacts with RRP7A; required for NOL6 localization to nucleolus. As to expression, ubiquitously expressed.

The protein resides in the nucleus. It is found in the nucleolus. The protein localises to the chromosome. Its function is as follows. Part of the small subunit (SSU) processome, first precursor of the small eukaryotic ribosomal subunit. During the assembly of the SSU processome in the nucleolus, many ribosome biogenesis factors, an RNA chaperone and ribosomal proteins associate with the nascent pre-rRNA and work in concert to generate RNA folding, modifications, rearrangements and cleavage as well as targeted degradation of pre-ribosomal RNA by the RNA exosome. The chain is Nucleolar protein 6 (Nol6) from Mus musculus (Mouse).